We begin with the raw amino-acid sequence, 115 residues long: Large ribosomal subunit protein eL36 (115 aa).

The protein belongs to the eukaryotic ribosomal protein eL36 family. In terms of assembly, component of the large ribosomal subunit.

It localises to the cytoplasm. Its subcellular location is the cytosol. In terms of biological role, component of the large ribosomal subunit. The protein is Large ribosomal subunit protein eL36 (RpL36) of Drosophila melanogaster (Fruit fly).